The sequence spans 732 residues: Serine/threonine-protein kinase CBK1 (732 aa).

The disordered stretch occupies residues 111 to 240; sequence SFDNHLNVDP…STEAANSDMT (130 aa). Positions 119–159 are enriched in polar residues; it reads DPNNTERFTSMDSMNFQPPASTFTQLGNGSSTNLSEISSGQ. Residues 160–171 are compositionally biased toward low complexity; it reads NSLLSNHSVNNL. Residues 172–183 show a composition bias toward polar residues; that stretch reads PTALTSDTSPPV. Residues 185 to 221 show a composition bias toward low complexity; it reads QHPQFQPQQQQQQQQPQQQQIFQQQQQQQQQQQQPQQ. A compositionally biased stretch (polar residues) spans 222-240; it reads SRAVVNQSVSTEAANSDMT. The stretch at 281–310 forms a coiled coil; sequence HAIERNQRRLELENKIANEDIGSSEERKNR. In terms of domain architecture, Protein kinase spans 335-647; the sequence is FHTVKVIGKG…AEEIKQHPFF (313 aa). ATP-binding positions include 341-349 and lysine 364; that span reads IGKGAFGEV. The active-site Proton acceptor is aspartate 458. Residues 648–730 form the AGC-kinase C-terminal domain; that stretch reads RGVDWDSIRD…SRFDYLTRKN (83 aa).

The protein belongs to the protein kinase superfamily. STE Ser/Thr protein kinase family. COT1 subfamily. Interacts with MOB2 and BCR1.

The protein resides in the bud neck. It localises to the cell tip. The catalysed reaction is L-seryl-[protein] + ATP = O-phospho-L-seryl-[protein] + ADP + H(+). It carries out the reaction L-threonyl-[protein] + ATP = O-phospho-L-threonyl-[protein] + ADP + H(+). Its function is as follows. Serine/threonine-protein kinase required for wild-type hyphal growth and transcriptional regulation of cell-wall-associated genes. Involved in the biofilm formation through phosphorylation of the master regulator of biofilm formation BCR1. In Candida albicans (strain SC5314 / ATCC MYA-2876) (Yeast), this protein is Serine/threonine-protein kinase CBK1 (CBK1).